We begin with the raw amino-acid sequence, 1207 residues long: DNA-directed RNA polymerase subunit beta' (1207 aa).

Zn(2+)-binding residues include C60, C62, C75, and C78. 3 residues coordinate Mg(2+): D450, D452, and D454. The Zn(2+) site is built by C818, C892, C899, and C902.

The protein belongs to the RNA polymerase beta' chain family. The RNAP catalytic core consists of 2 alpha, 1 beta, 1 beta' and 1 omega subunit. When a sigma factor is associated with the core the holoenzyme is formed, which can initiate transcription. Mg(2+) serves as cofactor. Zn(2+) is required as a cofactor.

It carries out the reaction RNA(n) + a ribonucleoside 5'-triphosphate = RNA(n+1) + diphosphate. Functionally, DNA-dependent RNA polymerase catalyzes the transcription of DNA into RNA using the four ribonucleoside triphosphates as substrates. The chain is DNA-directed RNA polymerase subunit beta' from Lactococcus lactis subsp. lactis (strain IL1403) (Streptococcus lactis).